A 92-amino-acid chain; its full sequence is Small ribosomal subunit protein uS19c (92 aa).

Belongs to the universal ribosomal protein uS19 family.

It is found in the plastid. The protein localises to the chloroplast. Functionally, protein S19 forms a complex with S13 that binds strongly to the 16S ribosomal RNA. This is Small ribosomal subunit protein uS19c from Nymphaea alba (White water-lily).